The following is a 492-amino-acid chain: NAD(P)H-quinone oxidoreductase subunit 2 A, chloroplastic (492 aa).

A run of 13 helical transmembrane segments spans residues 6 to 26 (LLLFHGSFIFPECILIFGLIL), 39 to 59 (TPWLYFISSTSLVMSITALLF), 81 to 101 (VFQFLILLCSTLCIPLSVEYI), 106 to 126 (MAITEFLLFVLTATLGGMFLC), 131 to 151 (LITIFVAPECFSLCSYLLSGY), 165 to 185 (YLLMGGASSSILVHGFSWLYG), 209 to 229 (PGISIALISITVGIGFKLSPA), 277 to 297 (WHLLLEILAILSMILGNLIAI), 305 to 325 (MLAYSSIGQIGYVIIGIIVGD), 329 to 349 (GYASMITYMLFYISMNLGTFA), 377 to 397 (ALSSALCLLSLGGIPPLAGFF), 400 to 420 (LHLFWCGWQAGLYFLVSIGLL), and 466 to 486 (MIVCVIASTIPGISMNPIIAI).

It belongs to the complex I subunit 2 family. In terms of assembly, NDH is composed of at least 16 different subunits, 5 of which are encoded in the nucleus.

It localises to the plastid. Its subcellular location is the chloroplast thylakoid membrane. It catalyses the reaction a plastoquinone + NADH + (n+1) H(+)(in) = a plastoquinol + NAD(+) + n H(+)(out). The catalysed reaction is a plastoquinone + NADPH + (n+1) H(+)(in) = a plastoquinol + NADP(+) + n H(+)(out). Functionally, NDH shuttles electrons from NAD(P)H:plastoquinone, via FMN and iron-sulfur (Fe-S) centers, to quinones in the photosynthetic chain and possibly in a chloroplast respiratory chain. The immediate electron acceptor for the enzyme in this species is believed to be plastoquinone. Couples the redox reaction to proton translocation, and thus conserves the redox energy in a proton gradient. The chain is NAD(P)H-quinone oxidoreductase subunit 2 A, chloroplastic from Illicium oligandrum (Star anise).